A 460-amino-acid chain; its full sequence is Cysteine--tRNA ligase (460 aa).

Cysteine 28 contributes to the Zn(2+) binding site. Residues 30–40 carry the 'HIGH' region motif; sequence MTVYDYCHLGH. 3 residues coordinate Zn(2+): cysteine 209, histidine 234, and glutamate 238. A 'KMSKS' region motif is present at residues 266–270; sequence KMSKS. Position 269 (lysine 269) interacts with ATP.

It belongs to the class-I aminoacyl-tRNA synthetase family. As to quaternary structure, monomer. The cofactor is Zn(2+).

It localises to the cytoplasm. It carries out the reaction tRNA(Cys) + L-cysteine + ATP = L-cysteinyl-tRNA(Cys) + AMP + diphosphate. This chain is Cysteine--tRNA ligase, found in Pseudomonas aeruginosa (strain UCBPP-PA14).